The chain runs to 943 residues: Neutral alpha-glucosidase AB (943 aa).

A signal peptide spans 1-23 (MRKLVILIILSIVCSLFIGSIES). A disordered region spans residues 186-231 (FEPISDKPQPLPPKEKKSEEENKEANQEEDNNNNNNDNNEEQQVST). Residues 198-211 (PKEKKSEEENKEAN) show a composition bias toward basic and acidic residues. Residue D540 is the Nucleophile of the active site. Residue E543 is part of the active site. D617 (proton donor) is an active-site residue. N878, N887, and N907 each carry an N-linked (GlcNAc...) asparagine glycan.

Belongs to the glycosyl hydrolase 31 family.

Its subcellular location is the endoplasmic reticulum. The protein resides in the golgi apparatus. The catalysed reaction is N(4)-(alpha-D-Glc-(1-&gt;3)-alpha-D-Man-(1-&gt;2)-alpha-D-Man-(1-&gt;2)-alpha-D-Man-(1-&gt;3)-[alpha-D-Man-(1-&gt;2)-alpha-D-Man-(1-&gt;3)-[alpha-D-Man-(1-&gt;2)-alpha-D-Man-(1-&gt;6)]-alpha-D-Man-(1-&gt;6)]-beta-D-Man-(1-&gt;4)-beta-D-GlcNAc-(1-&gt;4)-beta-D-GlcNAc)-L-asparaginyl-[protein] + H2O = N(4)-(alpha-D-Man-(1-&gt;2)-alpha-D-Man-(1-&gt;2)-alpha-D-Man-(1-&gt;3)-[alpha-D-Man-(1-&gt;2)-alpha-D-Man-(1-&gt;3)-[alpha-D-Man-(1-&gt;2)-alpha-D-Man-(1-&gt;6)]-alpha-D-Man-(1-&gt;6)]-beta-D-Man-(1-&gt;4)-beta-D-GlcNAc-(1-&gt;4)-beta-D-GlcNAc)-L-asparaginyl-[protein] (N-glucan mannose isomer 9A1,2,3B1,2,3) + beta-D-glucose. The enzyme catalyses N(4)-(alpha-D-Glc-(1-&gt;3)-alpha-D-Glc-(1-&gt;3)-alpha-D-Man-(1-&gt;2)-alpha-D-Man-(1-&gt;2)-alpha-D-Man-(1-&gt;3)-[alpha-D-Man-(1-&gt;2)-alpha-D-Man-(1-&gt;3)-[alpha-D-Man-(1-&gt;2)-alpha-D-Man-(1-&gt;6)]-alpha-D-Man-(1-&gt;6)]-beta-D-Man-(1-&gt;4)-beta-D-GlcNAc-(1-&gt;4)-beta-D-GlcNAc)-L-asparaginyl-[protein] + H2O = N(4)-(alpha-D-Glc-(1-&gt;3)-alpha-D-Man-(1-&gt;2)-alpha-D-Man-(1-&gt;2)-alpha-D-Man-(1-&gt;3)-[alpha-D-Man-(1-&gt;2)-alpha-D-Man-(1-&gt;3)-[alpha-D-Man-(1-&gt;2)-alpha-D-Man-(1-&gt;6)]-alpha-D-Man-(1-&gt;6)]-beta-D-Man-(1-&gt;4)-beta-D-GlcNAc-(1-&gt;4)-beta-D-GlcNAc)-L-asparaginyl-[protein] + beta-D-glucose. The protein operates within glycan metabolism; N-glycan metabolism. In terms of biological role, cleaves sequentially the 2 innermost alpha-1,3-linked glucose residues from N-linked oligosaccharides on newly synthesized glycoproteins. This Dictyostelium discoideum (Social amoeba) protein is Neutral alpha-glucosidase AB (modA).